We begin with the raw amino-acid sequence, 463 residues long: Argininosuccinate lyase (463 aa).

It belongs to the lyase 1 family. Argininosuccinate lyase subfamily.

The protein localises to the cytoplasm. It carries out the reaction 2-(N(omega)-L-arginino)succinate = fumarate + L-arginine. It functions in the pathway amino-acid biosynthesis; L-arginine biosynthesis; L-arginine from L-ornithine and carbamoyl phosphate: step 3/3. The protein is Argininosuccinate lyase of Methylorubrum populi (strain ATCC BAA-705 / NCIMB 13946 / BJ001) (Methylobacterium populi).